The sequence spans 241 residues: 1-(5-phosphoribosyl)-5-[(5-phosphoribosylamino)methylideneamino] imidazole-4-carboxamide isomerase (241 aa).

The active-site Proton acceptor is D8. Residue D130 is the Proton donor of the active site.

Belongs to the HisA/HisF family.

It localises to the cytoplasm. It catalyses the reaction 1-(5-phospho-beta-D-ribosyl)-5-[(5-phospho-beta-D-ribosylamino)methylideneamino]imidazole-4-carboxamide = 5-[(5-phospho-1-deoxy-D-ribulos-1-ylimino)methylamino]-1-(5-phospho-beta-D-ribosyl)imidazole-4-carboxamide. It functions in the pathway amino-acid biosynthesis; L-histidine biosynthesis; L-histidine from 5-phospho-alpha-D-ribose 1-diphosphate: step 4/9. The protein is 1-(5-phosphoribosyl)-5-[(5-phosphoribosylamino)methylideneamino] imidazole-4-carboxamide isomerase of Francisella philomiragia subsp. philomiragia (strain ATCC 25017 / CCUG 19701 / FSC 153 / O#319-036).